The sequence spans 54 residues: uncharacterized protein (54 aa).

Positions 1–21 (MNSKQILSLSAFAMTIATAAA) are cleaved as a signal peptide. Residues 22 to 29 (GNWNAGDT) lie on the Extracellular side of the membrane. Residues 30 to 50 (IALLIGIAMFFVLLLALLGWI) form a helical membrane-spanning segment. Over 51-54 (SRKK) the chain is Cytoplasmic.

It localises to the membrane. This is an uncharacterized protein from Dictyostelium discoideum (Social amoeba).